We begin with the raw amino-acid sequence, 466 residues long: Adenosylhomocysteinase (466 aa).

Substrate-binding residues include Thr-57, Asp-132, and Glu-192. NAD(+) is bound at residue 193–195; sequence TTT. 2 residues coordinate substrate: Lys-222 and Asp-226. Residues Asn-227, 256 to 261, Glu-279, Asn-314, 335 to 337, and Asn-380 contribute to the NAD(+) site; these read GYGDVG and IGH.

The protein belongs to the adenosylhomocysteinase family. NAD(+) serves as cofactor.

The protein localises to the cytoplasm. It catalyses the reaction S-adenosyl-L-homocysteine + H2O = L-homocysteine + adenosine. Its pathway is amino-acid biosynthesis; L-homocysteine biosynthesis; L-homocysteine from S-adenosyl-L-homocysteine: step 1/1. Its function is as follows. May play a key role in the regulation of the intracellular concentration of adenosylhomocysteine. This chain is Adenosylhomocysteinase, found in Rhizobium etli (strain CIAT 652).